The primary structure comprises 348 residues: Phenylalanine--tRNA ligase alpha subunit (348 aa).

Position 259 (glutamate 259) interacts with Mg(2+).

Belongs to the class-II aminoacyl-tRNA synthetase family. Phe-tRNA synthetase alpha subunit type 1 subfamily. In terms of assembly, tetramer of two alpha and two beta subunits. It depends on Mg(2+) as a cofactor.

The protein resides in the cytoplasm. It carries out the reaction tRNA(Phe) + L-phenylalanine + ATP = L-phenylalanyl-tRNA(Phe) + AMP + diphosphate + H(+). This is Phenylalanine--tRNA ligase alpha subunit from Latilactobacillus sakei subsp. sakei (strain 23K) (Lactobacillus sakei subsp. sakei).